A 145-amino-acid chain; its full sequence is Zinc finger C2H2 protein ECU06_1150 (145 aa).

Residues 35–57 form a C2H2-type 1; atypical zinc finger; the sequence is KDCARYGEAQASKHALLAHARRH. Residues 63–85 form a C2H2-type 2 zinc finger; it reads FECHLCGKDYTRSDPLKKHLLRH.

This is Zinc finger C2H2 protein ECU06_1150 from Encephalitozoon cuniculi (strain GB-M1) (Microsporidian parasite).